Here is a 405-residue protein sequence, read N- to C-terminus: Phosphoglycerate kinase (405 aa).

Residues 21–23 (DFN), Arg38, 59–62 (HQSR), Arg116, and Arg156 contribute to the substrate site. Residues Glu330 and 355-358 (GGHT) each bind ATP.

It belongs to the phosphoglycerate kinase family. As to quaternary structure, monomer.

The protein resides in the cytoplasm. It carries out the reaction (2R)-3-phosphoglycerate + ATP = (2R)-3-phospho-glyceroyl phosphate + ADP. The protein operates within carbohydrate degradation; glycolysis; pyruvate from D-glyceraldehyde 3-phosphate: step 2/5. In Methanocorpusculum labreanum (strain ATCC 43576 / DSM 4855 / Z), this protein is Phosphoglycerate kinase.